We begin with the raw amino-acid sequence, 465 residues long: L-seryl-tRNA(Sec) selenium transferase (465 aa).

The residue at position 294 (Lys-294) is an N6-(pyridoxal phosphate)lysine.

The protein belongs to the SelA family. Pyridoxal 5'-phosphate serves as cofactor.

The protein localises to the cytoplasm. It catalyses the reaction L-seryl-tRNA(Sec) + selenophosphate + H(+) = L-selenocysteinyl-tRNA(Sec) + phosphate. Its pathway is aminoacyl-tRNA biosynthesis; selenocysteinyl-tRNA(Sec) biosynthesis; selenocysteinyl-tRNA(Sec) from L-seryl-tRNA(Sec) (bacterial route): step 1/1. Its function is as follows. Converts seryl-tRNA(Sec) to selenocysteinyl-tRNA(Sec) required for selenoprotein biosynthesis. In Mannheimia succiniciproducens (strain KCTC 0769BP / MBEL55E), this protein is L-seryl-tRNA(Sec) selenium transferase.